The following is a 295-amino-acid chain: ATP synthase gamma chain (295 aa).

Belongs to the ATPase gamma chain family. As to quaternary structure, F-type ATPases have 2 components, CF(1) - the catalytic core - and CF(0) - the membrane proton channel. CF(1) has five subunits: alpha(3), beta(3), gamma(1), delta(1), epsilon(1). CF(0) has three main subunits: a, b and c.

The protein localises to the cell inner membrane. Produces ATP from ADP in the presence of a proton gradient across the membrane. The gamma chain is believed to be important in regulating ATPase activity and the flow of protons through the CF(0) complex. In Paraburkholderia phymatum (strain DSM 17167 / CIP 108236 / LMG 21445 / STM815) (Burkholderia phymatum), this protein is ATP synthase gamma chain.